Here is a 778-residue protein sequence, read N- to C-terminus: Putative ATP-dependent RNA helicase MJ1505 (778 aa).

Positions 22 to 186 (IAANALKKKT…EICENLGIEH (165 aa)) constitute a Helicase ATP-binding domain. ATP is bound at residue 35-42 (LSTGLGKT). The DEAH box motif lies at 137-140 (DEAH). A Helicase C-terminal domain is found at 338 to 516 (KVVDMVKNIL…EIKEETEEIK (179 aa)).

The protein belongs to the DEAD box helicase family. DEAH subfamily.

It catalyses the reaction ATP + H2O = ADP + phosphate + H(+). This Methanocaldococcus jannaschii (strain ATCC 43067 / DSM 2661 / JAL-1 / JCM 10045 / NBRC 100440) (Methanococcus jannaschii) protein is Putative ATP-dependent RNA helicase MJ1505.